The primary structure comprises 205 residues: N-(5'-phosphoribosyl)anthranilate isomerase (205 aa).

This sequence belongs to the TrpF family.

The enzyme catalyses N-(5-phospho-beta-D-ribosyl)anthranilate = 1-(2-carboxyphenylamino)-1-deoxy-D-ribulose 5-phosphate. It participates in amino-acid biosynthesis; L-tryptophan biosynthesis; L-tryptophan from chorismate: step 3/5. In Zygosaccharomyces bailii, this protein is N-(5'-phosphoribosyl)anthranilate isomerase (TRP1).